The chain runs to 245 residues: uncharacterized protein (245 aa).

6 helical membrane-spanning segments follow: residues 38 to 58 (IYPAFITVMALVSFIASAIFI), 68 to 88 (TIELAIAFLSNFYLGLTQGYF), 100 to 120 (IWSLAVEGQYYLIFPLILILA), 129 to 149 (VLFIITLILFFILLATSFVSA), 194 to 214 (VNNILAILSTLLLFSCLFLMN), and 217 to 237 (IAFIPGITLILPCIFTALIIH).

This sequence belongs to the acyltransferase 3 family.

The protein localises to the cell membrane. This is an uncharacterized protein from Haemophilus influenzae (strain ATCC 51907 / DSM 11121 / KW20 / Rd).